We begin with the raw amino-acid sequence, 216 residues long: Uracil phosphoribosyltransferase (216 aa).

5-phospho-alpha-D-ribose 1-diphosphate is bound by residues Arg84, Arg109, and 137 to 145; that span reads DPMLATGGS. Uracil contacts are provided by residues Ile202 and 207–209; that span reads GDA. A 5-phospho-alpha-D-ribose 1-diphosphate-binding site is contributed by Asp208.

The protein belongs to the UPRTase family. It depends on Mg(2+) as a cofactor.

It catalyses the reaction UMP + diphosphate = 5-phospho-alpha-D-ribose 1-diphosphate + uracil. It participates in pyrimidine metabolism; UMP biosynthesis via salvage pathway; UMP from uracil: step 1/1. Its activity is regulated as follows. Allosterically activated by GTP. In terms of biological role, catalyzes the conversion of uracil and 5-phospho-alpha-D-ribose 1-diphosphate (PRPP) to UMP and diphosphate. This chain is Uracil phosphoribosyltransferase, found in Nostoc sp. (strain PCC 7120 / SAG 25.82 / UTEX 2576).